Consider the following 185-residue polypeptide: MSRLKKRYLADVKPELQKKFAYKNLMQVPGLVKVVINMGIAEASKDKNSIQDCVKEMTMLSGQKPVITKAKKAISNFKLREDQPIGVKVTLRGQRMFDFIDRFVNIVCPRIRDFRGFPSKCDGMGNYTLGLDDQQIFPEINLDEVKRTQGMHITFVTSAKTDEECVELLRLLGIPFKNLPISVAA.

It belongs to the universal ribosomal protein uL5 family. In terms of assembly, part of the 50S ribosomal subunit; part of the 5S rRNA/L5/L18/L25 subcomplex. Contacts the 5S rRNA and the P site tRNA. Forms a bridge to the 30S subunit in the 70S ribosome.

Functionally, this is one of the proteins that bind and probably mediate the attachment of the 5S RNA into the large ribosomal subunit, where it forms part of the central protuberance. In the 70S ribosome it contacts protein S13 of the 30S subunit (bridge B1b), connecting the 2 subunits; this bridge is implicated in subunit movement. Contacts the P site tRNA; the 5S rRNA and some of its associated proteins might help stabilize positioning of ribosome-bound tRNAs. The protein is Large ribosomal subunit protein uL5 of Protochlamydia amoebophila (strain UWE25).